An 82-amino-acid chain; its full sequence is Small ribosomal subunit protein bS16 (82 aa).

The protein belongs to the bacterial ribosomal protein bS16 family.

This Serratia proteamaculans (strain 568) protein is Small ribosomal subunit protein bS16.